The sequence spans 439 residues: 26S proteasome regulatory subunit 4 (439 aa).

Disordered regions lie at residues 1 to 48 (MGQN…AMKL) and 82 to 104 (ERLK…LRGT). Basic and acidic residues-rich tracts occupy residues 12–25 (GEKK…KKYE) and 82–102 (ERLK…DDLR). 225-232 (GPPGTGKT) lines the ATP pocket.

This sequence belongs to the AAA ATPase family. As to quaternary structure, interacts with PSMD5.

The protein resides in the cytoplasm. The protein localises to the nucleus. The 26S proteasome is involved in the ATP-dependent degradation of ubiquitinated proteins. The regulatory (or ATPase) complex confers ATP dependency and substrate specificity to the 26S complex. This Drosophila melanogaster (Fruit fly) protein is 26S proteasome regulatory subunit 4 (Rpt2).